A 484-amino-acid polypeptide reads, in one-letter code: MQEGKNIWSLILAAIRKELSEEEFYIWFENLYFIDAIGENIKIATPNSFHKNQVEKRFSKRIKEILIEKGHSTINVEFIHSQNELKDHNTESKDIPLKAITHQQDLQTKNKDIKTHAKNIINNTKQYSIKEEIHIKYRNPFLKKKYTFENFIIGTNNKLAYNASLSIAKNPGKKYNPCLIYGGVGLGKTHLLQSIGNKTEELHKEFKILYVTAENFLNEFVESIKTNETKRFKKKYRHLDMLLLDDIHDLQKKEGIQEELFHTFNALYEDNKQMVFTCDRQPSELVNFTDRLKSRFTRGLNVDISKPNFELRVAIIEKKAEEDGIKVPKNILNLVAKKVTTNIRDLEAAVTKLKAHIDLEDIEIDTNIVDKIIKEIIAYENDHTNTPNKINIENIKKVILRELKLTNKDIEGNSKKPEITKARHIYAYLLRNFTELSTIEIGKIIGGKTHSTVLYSINKIDKDRNKNLEINNLIIELMNKINKN.

Residues Met-1–Thr-73 are domain I, interacts with DnaA modulators. Residues Thr-73 to Pro-140 form a domain II region. Residues Phe-141–Ile-357 form a domain III, AAA+ region region. Positions 185, 187, 188, and 189 each coordinate ATP. The tract at residues Asp-358 to Asn-484 is domain IV, binds dsDNA.

Belongs to the DnaA family. As to quaternary structure, oligomerizes as a right-handed, spiral filament on DNA at oriC.

It is found in the cytoplasm. In terms of biological role, plays an essential role in the initiation and regulation of chromosomal replication. ATP-DnaA binds to the origin of replication (oriC) to initiate formation of the DNA replication initiation complex once per cell cycle. Binds the DnaA box (a 9 base pair repeat at the origin) and separates the double-stranded (ds)DNA. Forms a right-handed helical filament on oriC DNA; dsDNA binds to the exterior of the filament while single-stranded (ss)DNA is stabiized in the filament's interior. The ATP-DnaA-oriC complex binds and stabilizes one strand of the AT-rich DNA unwinding element (DUE), permitting loading of DNA polymerase. After initiation quickly degrades to an ADP-DnaA complex that is not apt for DNA replication. Binds acidic phospholipids. This is Chromosomal replication initiator protein DnaA from Borrelia recurrentis (strain A1).